Consider the following 78-residue polypeptide: MSCCGGNCGCGSGCNGCGGCKMYPDLSYNESTTTETLVLGVGHEKTSFGTMEMGESPAAENGCKCGSECKCNPCACSK.

Belongs to the metallothionein superfamily. Type 15 family.

Its function is as follows. Metallothioneins have a high content of cysteine residues that bind various heavy metals. The polypeptide is Metallothionein-like protein type 2 (Nicotiana glutinosa (Tobacco)).